A 467-amino-acid chain; its full sequence is Asparagine--tRNA ligase (467 aa).

It belongs to the class-II aminoacyl-tRNA synthetase family. Homodimer.

The protein localises to the cytoplasm. The enzyme catalyses tRNA(Asn) + L-asparagine + ATP = L-asparaginyl-tRNA(Asn) + AMP + diphosphate + H(+). This chain is Asparagine--tRNA ligase, found in Haemophilus influenzae (strain PittEE).